Reading from the N-terminus, the 203-residue chain is Probable chemoreceptor glutamine deamidase CheD (203 aa).

It belongs to the CheD family.

It carries out the reaction L-glutaminyl-[protein] + H2O = L-glutamyl-[protein] + NH4(+). Its function is as follows. Probably deamidates glutamine residues to glutamate on methyl-accepting chemotaxis receptors (MCPs), playing an important role in chemotaxis. The protein is Probable chemoreceptor glutamine deamidase CheD of Herminiimonas arsenicoxydans.